The chain runs to 366 residues: S-adenosylmethionine:tRNA ribosyltransferase-isomerase (366 aa).

Belongs to the QueA family. As to quaternary structure, monomer.

The protein resides in the cytoplasm. The catalysed reaction is 7-aminomethyl-7-carbaguanosine(34) in tRNA + S-adenosyl-L-methionine = epoxyqueuosine(34) in tRNA + adenine + L-methionine + 2 H(+). The protein operates within tRNA modification; tRNA-queuosine biosynthesis. Functionally, transfers and isomerizes the ribose moiety from AdoMet to the 7-aminomethyl group of 7-deazaguanine (preQ1-tRNA) to give epoxyqueuosine (oQ-tRNA). This Caulobacter vibrioides (strain ATCC 19089 / CIP 103742 / CB 15) (Caulobacter crescentus) protein is S-adenosylmethionine:tRNA ribosyltransferase-isomerase.